The chain runs to 126 residues: Fluoride-specific ion channel FluC (126 aa).

The next 4 membrane-spanning stretches (helical) occupy residues 4–24, 36–56, 68–88, and 99–119; these read SILA…FLGL, GTLA…ALFA, LIIT…AEVV, and AFAA…AGIA. Residues Gly75 and Thr78 each contribute to the Na(+) site.

It belongs to the fluoride channel Fluc/FEX (TC 1.A.43) family.

The protein localises to the cell inner membrane. It carries out the reaction fluoride(in) = fluoride(out). Na(+) is not transported, but it plays an essential structural role and its presence is essential for fluoride channel function. Its function is as follows. Fluoride-specific ion channel. Important for reducing fluoride concentration in the cell, thus reducing its toxicity. This chain is Fluoride-specific ion channel FluC, found in Chromobacterium violaceum (strain ATCC 12472 / DSM 30191 / JCM 1249 / CCUG 213 / NBRC 12614 / NCIMB 9131 / NCTC 9757 / MK).